The following is a 311-amino-acid chain: Dihydroorotate dehydrogenase A (fumarate) (311 aa).

FMN contacts are provided by residues Ser-19 and Lys-43 to Ser-44. Residues Lys-43, Asn-67–Leu-71, and Asn-127 each bind substrate. Asn-127 is an FMN binding site. Residue Cys-130 is the Nucleophile of the active site. Positions 164 and 192 each coordinate FMN. Position 193-194 (Asn-193–Ser-194) interacts with substrate. Residues Gly-221, Gly-249–Gly-250, and Gly-271–Thr-272 each bind FMN.

The protein belongs to the dihydroorotate dehydrogenase family. Type 1 subfamily. Homodimer. It depends on FMN as a cofactor.

It is found in the cytoplasm. It catalyses the reaction (S)-dihydroorotate + fumarate = orotate + succinate. It functions in the pathway pyrimidine metabolism; UMP biosynthesis via de novo pathway. Its function is as follows. Catalyzes the conversion of dihydroorotate to orotate with fumarate as the electron acceptor. The polypeptide is Dihydroorotate dehydrogenase A (fumarate) (pyrDA) (Lactococcus lactis subsp. lactis (strain IL1403) (Streptococcus lactis)).